We begin with the raw amino-acid sequence, 143 residues long: Type II secretion system core protein G (143 aa).

Positions 1-17 are cleaved as a propeptide — leader sequence; sequence MIKRSITRSPSRAGQAG. M18 is subject to N-methylmethionine. A helical membrane pass occupies residues 18-38; it reads MSLLEIIIVIVLIGAVLTLVG.

It belongs to the GSP G family. In terms of assembly, type II secretion system is composed of four main components: the outer membrane complex, the inner membrane complex, the cytoplasmic secretion ATPase and the periplasm-spanning pseudopilus. Forms homomultimers. Interacts with pseudopilin tip complex component XpsJ as well as XpsI and XcpH. Interacts with XpsN and secretin XpsD. Cleaved by the prepilin peptidase. Post-translationally, methylated by prepilin peptidase at the amino group of the N-terminal methionine once the leader sequence is cleaved.

The protein localises to the cell inner membrane. Its function is as follows. Core component of the type II secretion system required for the energy-dependent secretion of extracellular factors such as proteases and toxins from the periplasm. Pseudopilin (pilin-like) protein that polymerizes to form the pseudopilus. Further polymerization triggers pseudopilus growth. This Xanthomonas campestris pv. campestris (strain ATCC 33913 / DSM 3586 / NCPPB 528 / LMG 568 / P 25) protein is Type II secretion system core protein G (xpsG).